The chain runs to 301 residues: 2-methoxy-6-polyprenyl-1,4-benzoquinol methylase, mitochondrial (301 aa).

A mitochondrion-targeting transit peptide spans 1–16 (MQTTRSTRLLSLARRF). The segment covering 20–31 (RTASQSAQNSKG) has biased composition (polar residues). The interval 20–44 (RTASQSAQNSKGMASGAESISGKEK) is disordered. S-adenosyl-L-methionine contacts are provided by residues threonine 111, aspartate 139, and 173-174 (DA).

Belongs to the class I-like SAM-binding methyltransferase superfamily. MenG/UbiE family. Component of a multi-subunit COQ enzyme complex.

It is found in the mitochondrion inner membrane. It catalyses the reaction a 2-methoxy-6-(all-trans-polyprenyl)benzene-1,4-diol + S-adenosyl-L-methionine = a 5-methoxy-2-methyl-3-(all-trans-polyprenyl)benzene-1,4-diol + S-adenosyl-L-homocysteine + H(+). It functions in the pathway cofactor biosynthesis; ubiquinone biosynthesis. In terms of biological role, methyltransferase required for the conversion of 2-polyprenyl-6-methoxy-1,4-benzoquinol (DDMQH2) to 2-polyprenyl-3-methyl-6-methoxy-1,4-benzoquinol (DMQH2). The protein is 2-methoxy-6-polyprenyl-1,4-benzoquinol methylase, mitochondrial of Drosophila melanogaster (Fruit fly).